The following is a 175-amino-acid chain: Large ribosomal subunit protein uL10 (175 aa).

The protein belongs to the universal ribosomal protein uL10 family. In terms of assembly, part of the ribosomal stalk of the 50S ribosomal subunit. The N-terminus interacts with L11 and the large rRNA to form the base of the stalk. The C-terminus forms an elongated spine to which L12 dimers bind in a sequential fashion forming a multimeric L10(L12)X complex.

In terms of biological role, forms part of the ribosomal stalk, playing a central role in the interaction of the ribosome with GTP-bound translation factors. In Xylella fastidiosa (strain M12), this protein is Large ribosomal subunit protein uL10.